A 475-amino-acid polypeptide reads, in one-letter code: Ankyrin repeat, SAM and basic leucine zipper domain-containing protein 1 (475 aa).

Residues 1–25 (MAAGTLRGLAVAGGGESSDSEDDGW) are disordered. A phosphoserine mark is found at serine 17, serine 18, and serine 20. 6 ANK repeats span residues 45 to 74 (EKNE…NVDS), 78 to 107 (YGWT…NASF), 110 to 144 (DKLT…DPNT), 148 to 177 (RLMT…EVNA), 181 to 210 (NGYT…NKML), and 214 to 243 (DGRT…PLEG). One can recognise an SAM domain in the interval 272 to 334 (PYTAFGDLEI…KILAALKELE (63 aa)).

As to quaternary structure, interacts with DDX4, PIWIL1, RANBP9 and TDRD1. In terms of tissue distribution, expressed exclusively in testis and ovary with higher levels in testis.

It localises to the cytoplasm. In terms of biological role, plays a central role during spermatogenesis by repressing transposable elements and preventing their mobilization, which is essential for the germline integrity. Acts via the piRNA metabolic process, which mediates the repression of transposable elements during meiosis by forming complexes composed of piRNAs and Piwi proteins and governs the methylation and subsequent repression of transposons. Its association with pi-bodies suggests a participation in the primary piRNAs metabolic process. Required prior to the pachytene stage to facilitate the production of multiple types of piRNAs, including those associated with repeats involved in regulation of retrotransposons. May act by mediating protein-protein interactions during germ cell maturation. The chain is Ankyrin repeat, SAM and basic leucine zipper domain-containing protein 1 from Mus musculus (Mouse).